A 738-amino-acid chain; its full sequence is Conserved oligomeric Golgi complex subunit 4 (738 aa).

This sequence belongs to the COG4 family. In terms of assembly, component of the conserved oligomeric Golgi complex.

Its subcellular location is the golgi apparatus membrane. In terms of biological role, component of the peripheral membrane COG complex that is involved in intra-Golgi protein trafficking. COG is located at the cis-Golgi, and regulates tethering of retrograde intra-Golgi vesicles and possibly a number of other membrane trafficking events. This Schizosaccharomyces pombe (strain 972 / ATCC 24843) (Fission yeast) protein is Conserved oligomeric Golgi complex subunit 4 (cog4).